Consider the following 1671-residue polypeptide: Kinesin-like protein unc-104 (1671 aa).

One can recognise a Kinesin motor domain in the interval 3-351 (SVKVAVRVRP…LRYADRAKQI (349 aa)). 97–104 (GQTGAGKS) serves as a coordination point for ATP. Residues 358–437 (NEDANAKLIR…IAELNETWEE (80 aa)) are a coiled coil. Residues 391–413 (DELNKSTTGIKSPSKSRNRNGST) are disordered. The span at 395–413 (KSTTGIKSPSKSRNRNGST) shows a compositional bias: polar residues. Residues 500 to 566 (TRLGTHEANV…LKTGSRVILG (67 aa)) form the FHA domain. The stretch at 577–674 (EQARELREKI…EEQSMTMSMY (98 aa)) forms a coiled coil. Residues 949-973 (DVDSGRGIDSNSASDCPENAEEPGE) are disordered. The PH domain maps to 1538-1636 (VVARKGLLNV…WLYAINPLLA (99 aa)).

It belongs to the TRAFAC class myosin-kinesin ATPase superfamily. Kinesin family. Unc-104 subfamily. As to quaternary structure, monomer.

The protein resides in the cytoplasm. The protein localises to the cytoskeleton. Required for presynaptic maturation, has a role in axonal transport of dense-core vesicles carrying synaptic vesicle precursors, components required for the morphological transformation of axonal growth cones to mature boutons. This Drosophila pseudoobscura pseudoobscura (Fruit fly) protein is Kinesin-like protein unc-104.